Here is a 338-residue protein sequence, read N- to C-terminus: Probable tRNA pseudouridine synthase B (338 aa).

Asp-78 (nucleophile) is an active-site residue. Residues 245 to 320 (LPKIILRDSA…IAASPIRVLM (76 aa)) form the PUA domain.

Belongs to the pseudouridine synthase TruB family. Type 2 subfamily.

The enzyme catalyses uridine(55) in tRNA = pseudouridine(55) in tRNA. Its function is as follows. Could be responsible for synthesis of pseudouridine from uracil-55 in the psi GC loop of transfer RNAs. The protein is Probable tRNA pseudouridine synthase B of Methanosarcina mazei (strain ATCC BAA-159 / DSM 3647 / Goe1 / Go1 / JCM 11833 / OCM 88) (Methanosarcina frisia).